Here is a 617-residue protein sequence, read N- to C-terminus: Dihydroxy-acid dehydratase (617 aa).

Asp81 provides a ligand contact to Mg(2+). [2Fe-2S] cluster is bound at residue Cys122. The Mg(2+) site is built by Asp123 and Lys124. Lys124 carries the post-translational modification N6-carboxylysine. Cys195 serves as a coordination point for [2Fe-2S] cluster. Glu491 contacts Mg(2+). Ser517 acts as the Proton acceptor in catalysis.

This sequence belongs to the IlvD/Edd family. As to quaternary structure, homodimer. It depends on [2Fe-2S] cluster as a cofactor. Mg(2+) serves as cofactor.

The catalysed reaction is (2R)-2,3-dihydroxy-3-methylbutanoate = 3-methyl-2-oxobutanoate + H2O. The enzyme catalyses (2R,3R)-2,3-dihydroxy-3-methylpentanoate = (S)-3-methyl-2-oxopentanoate + H2O. It participates in amino-acid biosynthesis; L-isoleucine biosynthesis; L-isoleucine from 2-oxobutanoate: step 3/4. The protein operates within amino-acid biosynthesis; L-valine biosynthesis; L-valine from pyruvate: step 3/4. Functionally, functions in the biosynthesis of branched-chain amino acids. Catalyzes the dehydration of (2R,3R)-2,3-dihydroxy-3-methylpentanoate (2,3-dihydroxy-3-methylvalerate) into 2-oxo-3-methylpentanoate (2-oxo-3-methylvalerate) and of (2R)-2,3-dihydroxy-3-methylbutanoate (2,3-dihydroxyisovalerate) into 2-oxo-3-methylbutanoate (2-oxoisovalerate), the penultimate precursor to L-isoleucine and L-valine, respectively. This Buchnera aphidicola subsp. Schizaphis graminum (strain Sg) protein is Dihydroxy-acid dehydratase.